A 453-amino-acid polypeptide reads, in one-letter code: Putative sodium-coupled neutral amino acid transporter 11 (453 aa).

Positions 1 to 34 (MSYQQPQLRGPLQRETDPSDRESLVSGHEHGGKS) are disordered. Over residues 12–32 (LQRETDPSDRESLVSGHEHGG) the composition is skewed to basic and acidic residues. The next 11 membrane-spanning stretches (helical) occupy residues 39 to 59 (AVFN…PYSM), 66 to 86 (LGIL…VLLI), 106 to 126 (GFPG…IAMI), 152 to 172 (FISR…PLSL), 179 to 199 (LGKI…VVVT), 222 to 242 (AIQA…CFLV), 262 to 282 (ILVS…TFTG), 299 to 319 (VTFG…IECF), 337 to 357 (VFHV…SLLI), 359 to 379 (CLGI…IFII), and 399 to 419 (MACV…VMAI).

This sequence belongs to the amino acid/polyamine transporter 2 family. In terms of tissue distribution, widely expressed.

It is found in the membrane. Functionally, putative sodium-dependent amino acid/proton antiporter. The protein is Putative sodium-coupled neutral amino acid transporter 11 (Slc38a11) of Rattus norvegicus (Rat).